A 489-amino-acid chain; its full sequence is Cysteine--tRNA ligase (489 aa).

Cysteine 27 is a Zn(2+) binding site. Residues 29 to 39 carry the 'HIGH' region motif; the sequence is VTVYDLCHLGH. Zn(2+) contacts are provided by cysteine 211, histidine 236, and glutamate 240. The 'KMSKS' region signature appears at 268 to 272; the sequence is KMSKS. Lysine 271 contacts ATP.

It belongs to the class-I aminoacyl-tRNA synthetase family. As to quaternary structure, monomer. The cofactor is Zn(2+).

It localises to the cytoplasm. The catalysed reaction is tRNA(Cys) + L-cysteine + ATP = L-cysteinyl-tRNA(Cys) + AMP + diphosphate. This is Cysteine--tRNA ligase from Prochlorococcus marinus (strain MIT 9312).